The primary structure comprises 193 residues: uncharacterized protein (193 aa).

Residues 1 to 84 (MTSKCSKWHE…RRSNQRIQLY (84 aa)) are disordered. A compositionally biased stretch (basic residues) spans 43–78 (SSPRRSSPRRSPRRSSPRRSSPRRSSPRRSSPRRSN).

This sequence belongs to the IIV-6 378R family.

This is an uncharacterized protein from Invertebrate iridescent virus 6 (IIV-6).